The sequence spans 309 residues: Ecotin-like protein 3 (309 aa).

The disordered stretch occupies residues 140–309 (QQELEAPAVS…KSGRDSRRNS (170 aa)). Residues 156 to 167 (VRERQNNPEGHA) are compositionally biased toward basic and acidic residues. The segment covering 168-180 (HPVVVHSVESPEV) has biased composition (low complexity). Positions 181-190 (SGHKDGDQPM) are enriched in basic and acidic residues. Residues 196–205 (LKQSCSNSSR) show a composition bias toward low complexity. Over residues 209–221 (HSASGSSPKNTPL) the composition is skewed to polar residues. A compositionally biased stretch (basic and acidic residues) spans 261–279 (SDSTSSRKDDQDSGYEKKV). A compositionally biased stretch (low complexity) spans 290-299 (SSPKRSASPK).

It belongs to the protease inhibitor I11 (ecotin) family.

This Leishmania braziliensis protein is Ecotin-like protein 3.